A 106-amino-acid polypeptide reads, in one-letter code: Large ribosomal subunit protein eL42 (106 aa).

This sequence belongs to the eukaryotic ribosomal protein eL42 family.

This chain is Large ribosomal subunit protein eL42 (RPL44), found in Yarrowia lipolytica (strain CLIB 122 / E 150) (Yeast).